The chain runs to 261 residues: Phosphatidylglycerol--prolipoprotein diacylglyceryl transferase (261 aa).

A run of 7 helical transmembrane segments spans residues 19-39, 56-76, 92-112, 126-146, 173-193, 199-219, and 227-247; these read VHWYGLMYLVGFAMAWGLALY, LIFYGALGLIIGGRLGYMLFY, WRGGMSFHGGLIGVIVTTWIF, FVVPLVPLGLAAGRIGNFING, QLYEFLLEGVLLFIVIWWFSA, FAVSSLFLLCYGLFRFTAEFF, and GFVAFGWLTRGQELSLPMIII. Arg-139 lines the a 1,2-diacyl-sn-glycero-3-phospho-(1'-sn-glycerol) pocket.

Belongs to the Lgt family.

It localises to the cell inner membrane. The enzyme catalyses L-cysteinyl-[prolipoprotein] + a 1,2-diacyl-sn-glycero-3-phospho-(1'-sn-glycerol) = an S-1,2-diacyl-sn-glyceryl-L-cysteinyl-[prolipoprotein] + sn-glycerol 1-phosphate + H(+). It participates in protein modification; lipoprotein biosynthesis (diacylglyceryl transfer). In terms of biological role, catalyzes the transfer of the diacylglyceryl group from phosphatidylglycerol to the sulfhydryl group of the N-terminal cysteine of a prolipoprotein, the first step in the formation of mature lipoproteins. This chain is Phosphatidylglycerol--prolipoprotein diacylglyceryl transferase, found in Coxiella burnetii (strain CbuK_Q154) (Coxiella burnetii (strain Q154)).